The chain runs to 577 residues: External alternative NAD(P)H-ubiquinone oxidoreductase B1, mitochondrial (577 aa).

A mitochondrion-targeting transit peptide spans 1–35; the sequence is MRGFTYLSKVLHSHSSYSKLLVLCSVSTGGLLVYA. Position 57 to 87 (57 to 87) interacts with FAD; sequence RVVVLGTGWGGTSFLKDVDISSYDVQVVSPR. An NAD(+)-binding site is contributed by 221 to 257; that stretch reads LHFVIVGGGPTGVEFAAELHDYVYEDLVKIYPSVKDF. Positions 378-413 constitute an EF-hand domain; it reads KVMEDISTIFEAADKDDSGTLSVEEFRDVLEDIIIR. Residues Asp391, Asp393, Ser395, Thr397, and Glu402 each contribute to the Ca(2+) site. A Microbody targeting signal motif is present at residues 568-577; it reads YIFGRDSSRI.

Belongs to the NADH dehydrogenase family. FAD is required as a cofactor.

It localises to the mitochondrion inner membrane. Its subcellular location is the peroxisome. The catalysed reaction is a quinone + NADH + H(+) = a quinol + NAD(+). It carries out the reaction a ubiquinone + NADH + H(+) = a ubiquinol + NAD(+). With respect to regulation, activity is calcium-dependent with a more pronounced effect at higher pH. Its function is as follows. Calcium-dependent NAD(P)H dehydrogenase. Binds calcium ions. Alternative NADH-ubiquinone oxidoreductase which catalyzes the oxidation of mitochondrial NADH does not translocate protons across the inner mitochondrial membrane. This Solanum tuberosum (Potato) protein is External alternative NAD(P)H-ubiquinone oxidoreductase B1, mitochondrial (NDB1).